The following is a 1737-amino-acid chain: Intraflagellar transport protein osm-1 (1737 aa).

7 WD repeats span residues 14-53, 63-103, 110-150, 151-189, 191-229, 233-273, and 511-553; these read DGEA…KDRF, GKKS…NEKK, VQPS…SLYK, TDET…QSKI, TLQV…QQFD, QSEK…WDEG, and DQRS…EQVT. TPR repeat units lie at residues 700–737, 803–836, 848–881, 907–940, 979–1012, 1037–1070, and 1137–1170; these read NDTE…KTSY, SQLY…GKAI, VTLE…KKAV, TGYY…NDAI, HGRF…DDVL, RGDL…SDAY, and GTVH…ELAV.

This sequence belongs to the IFT172 family. As to quaternary structure, component of the IFT complex B composed of at least che-2, che-13, dyf-1, dyf-3, dyf-6, dyf-11, dyf-13, ift-20, ift-74, ift-81, ifta-2, osm-1, osm-5 and osm-6. In terms of tissue distribution, expressed in amphid and phasmid chemosensory neurons, where it appears to concentrate at the base of the transition zones, which correspond to the basal bodies of motile and sensory cilia. Moves in the retrograde direction along cilia and dendrites, suggesting that it is retrieved from the distal endings of the cilia by a retrograde transport pathway that moves it along cilia and then dendrites, back to the neuronal cell body.

The protein localises to the cell projection. It is found in the cilium. In terms of biological role, component of the intraflagellar transport (IFT) complex B required for transport of proteins in the motile cilium. May be required for ciliary entrance and transport of specific ciliary cargo proteins such as che-3 which are related to motility. Required for the maintenance and formation of chemosensory cilia that detect chemosensory cues. In Caenorhabditis elegans, this protein is Intraflagellar transport protein osm-1.